The following is a 541-amino-acid chain: Chaperonin GroEL (541 aa).

ATP contacts are provided by residues 29–32 (TLGP), 86–90 (DGTTT), Gly-413, 476–478 (NAA), and Asp-492.

It belongs to the chaperonin (HSP60) family. Forms a cylinder of 14 subunits composed of two heptameric rings stacked back-to-back. Interacts with the co-chaperonin GroES.

The protein resides in the cytoplasm. It carries out the reaction ATP + H2O + a folded polypeptide = ADP + phosphate + an unfolded polypeptide.. Functionally, together with its co-chaperonin GroES, plays an essential role in assisting protein folding. The GroEL-GroES system forms a nano-cage that allows encapsulation of the non-native substrate proteins and provides a physical environment optimized to promote and accelerate protein folding. This Streptococcus equi subsp. zooepidemicus (strain MGCS10565) protein is Chaperonin GroEL.